A 224-amino-acid polypeptide reads, in one-letter code: uncharacterized protein (224 aa).

The Matrin-type zinc finger occupies 11–42 (YYCKYCQIFVKDTPFARRSHEQTYKHQDAIKK). The segment covering 67–80 (ATATTASAVSSELA) has biased composition (low complexity). Disordered regions lie at residues 67–158 (ATAT…RNRE) and 172–224 (VKPK…YDQS). Residues 87 to 98 (KEHPKLRPSKKK) are compositionally biased toward basic residues. Low complexity predominate over residues 108-122 (TSSTETDTISTTHTS). A compositionally biased stretch (basic and acidic residues) spans 175–199 (KNLDKVPKLAENEGNKSLESKESNE). The span at 203–216 (VFKKKKSGKLRTKS) shows a compositional bias: basic residues.

It localises to the nucleus. Its subcellular location is the nucleolus. This is an uncharacterized protein from Schizosaccharomyces pombe (strain 972 / ATCC 24843) (Fission yeast).